Here is a 339-residue protein sequence, read N- to C-terminus: Phosphate acyltransferase (339 aa).

It belongs to the PlsX family. Homodimer. Probably interacts with PlsY.

It localises to the cytoplasm. The enzyme catalyses a fatty acyl-[ACP] + phosphate = an acyl phosphate + holo-[ACP]. Its pathway is lipid metabolism; phospholipid metabolism. In terms of biological role, catalyzes the reversible formation of acyl-phosphate (acyl-PO(4)) from acyl-[acyl-carrier-protein] (acyl-ACP). This enzyme utilizes acyl-ACP as fatty acyl donor, but not acyl-CoA. In Ruthia magnifica subsp. Calyptogena magnifica, this protein is Phosphate acyltransferase.